A 353-amino-acid polypeptide reads, in one-letter code: Photosystem II D2 protein (353 aa).

Thr2 is modified (N-acetylthreonine). The residue at position 2 (Thr2) is a Phosphothreonine. Residues 41–61 (CAYFALGGWLTGTTFVTSWYT) traverse the membrane as a helical segment. Residue His118 participates in chlorophyll a binding. A helical transmembrane segment spans residues 125 to 141 (GFMLRQFELARSVQLRP). Residues Gln130 and Asn143 each contribute to the pheophytin a site. A helical membrane pass occupies residues 153–166 (VFVSVFLIYPLGQS). His198 is a binding site for chlorophyll a. Residues 208 to 228 (AALLCAIHGATVENTLFEDGD) form a helical membrane-spanning segment. His215 and Phe262 together coordinate a plastoquinone. His215 provides a ligand contact to Fe cation. His269 contacts Fe cation. Residues 279-295 (GLWMSAIGVVGLALNLR) form a helical membrane-spanning segment.

It belongs to the reaction center PufL/M/PsbA/D family. PSII is composed of 1 copy each of membrane proteins PsbA, PsbB, PsbC, PsbD, PsbE, PsbF, PsbH, PsbI, PsbJ, PsbK, PsbL, PsbM, PsbT, PsbX, PsbY, PsbZ, Psb30/Ycf12, at least 3 peripheral proteins of the oxygen-evolving complex and a large number of cofactors. It forms dimeric complexes. The D1/D2 heterodimer binds P680, chlorophylls that are the primary electron donor of PSII, and subsequent electron acceptors. It shares a non-heme iron and each subunit binds pheophytin, quinone, additional chlorophylls, carotenoids and lipids. There is also a Cl(-1) ion associated with D1 and D2, which is required for oxygen evolution. The PSII complex binds additional chlorophylls, carotenoids and specific lipids. serves as cofactor.

Its subcellular location is the plastid. It is found in the chloroplast thylakoid membrane. The catalysed reaction is 2 a plastoquinone + 4 hnu + 2 H2O = 2 a plastoquinol + O2. Photosystem II (PSII) is a light-driven water:plastoquinone oxidoreductase that uses light energy to abstract electrons from H(2)O, generating O(2) and a proton gradient subsequently used for ATP formation. It consists of a core antenna complex that captures photons, and an electron transfer chain that converts photonic excitation into a charge separation. The D1/D2 (PsbA/PsbD) reaction center heterodimer binds P680, the primary electron donor of PSII as well as several subsequent electron acceptors. D2 is needed for assembly of a stable PSII complex. The polypeptide is Photosystem II D2 protein (Zygnema circumcarinatum (Green alga)).